The primary structure comprises 492 residues: RNA helicase CrhR (492 aa).

Positions 7–35 match the Q motif motif; that stretch reads STFADLGLSEKRCQLLADIGFEAPTQIQT. In terms of domain architecture, Helicase ATP-binding spans 38–207; that stretch reads IPLLLSGRDM…NQFLNDPALV (170 aa). 51 to 58 serves as a coordination point for ATP; that stretch reads SQTGTGKT. The DEAD box signature appears at 155–158; it reads DEAD. The Helicase C-terminal domain occupies 234–379; that stretch reads KALQPILEME…VCTIPNRSQV (146 aa). The segment at 451–492 is disordered; that stretch reads VLRRGRNAGGGQNKSGGGYQGKPGKPRRSSGGRRPAYSDRQQ. The segment covering 457-471 has biased composition (gly residues); that stretch reads NAGGGQNKSGGGYQG.

Belongs to the DEAD box helicase family.

The protein resides in the cytoplasm. It localises to the cell inner membrane. Its subcellular location is the cellular thylakoid membrane. It carries out the reaction ATP + H2O = ADP + phosphate + H(+). Its activity is regulated as follows. Helicase inhibited by the slowly-hydrolyzing ATP analog ATP-gamma-S. Protein is rapidly degraded upon shifting from 20 to 30 degrees Celsius, the degradation machinery is only transiently present in cells grown at 30 degrees Celsius, is inhibited by commercial protease inhibitors and requires full-length protein expression (the N-terminal fragment does not induce proteolysis although it can be degraded by wild-type extract). An ATP-dependent bidirectional RNA helicase with RNA-dependent ATPase activity; does not unwind dsDNA, uses only (d)ATP. Also has ATP-dependent RNA annealing activity; concurrent annealing and helicase activity promote strand-exchange activity. In vitro has low helicase processivity, annealing processivity is probably higher. Required for correct cold adaptation, probably by aiding translation of mRNAs required for photosynthesis and electron transport. Probably regulates the cold-shock-inducible expression of the GroESL chaperones. May partially regulate its own expression at both the transcriptional and post-transcriptional level (experiments used a construct expressing a 25 kDa trunacted protein which might have dominant-negative effects); is probably not directly involved in the pathway responsible for mRNA degradation. The protein is RNA helicase CrhR of Synechocystis sp. (strain ATCC 27184 / PCC 6803 / Kazusa).